The sequence spans 276 residues: Undecaprenyl-diphosphatase 1 (276 aa).

The next 8 membrane-spanning stretches (helical) occupy residues 1-21 (MSLW…LFPV), 44-64 (QLLP…LWYF), 87-107 (GHLM…GLLL), 114-134 (VFHD…LLWL), 150-170 (LTFK…IPGF), 190-210 (AAEF…LLEL), 222-242 (DALL…RFLM), and 251-271 (LASF…WFMF).

The protein belongs to the UppP family.

It is found in the cell inner membrane. It catalyses the reaction di-trans,octa-cis-undecaprenyl diphosphate + H2O = di-trans,octa-cis-undecaprenyl phosphate + phosphate + H(+). In terms of biological role, catalyzes the dephosphorylation of undecaprenyl diphosphate (UPP). Confers resistance to bacitracin. The protein is Undecaprenyl-diphosphatase 1 of Burkholderia pseudomallei (strain 1106a).